The chain runs to 198 residues: Large ribosomal subunit protein bL25 (198 aa).

This sequence belongs to the bacterial ribosomal protein bL25 family. CTC subfamily. In terms of assembly, part of the 50S ribosomal subunit; part of the 5S rRNA/L5/L18/L25 subcomplex. Contacts the 5S rRNA. Binds to the 5S rRNA independently of L5 and L18.

In terms of biological role, this is one of the proteins that binds to the 5S RNA in the ribosome where it forms part of the central protuberance. The chain is Large ribosomal subunit protein bL25 from Azotobacter vinelandii (strain DJ / ATCC BAA-1303).